A 709-amino-acid polypeptide reads, in one-letter code: Elongation factor G (709 aa).

Residues 8-297 enclose the tr-type G domain; the sequence is ANTRNIGIMA…AVIDYLPSPL (290 aa). GTP is bound by residues 17–24, 81–85, and 135–138; these read AHVDAGKT, DTPGH, and NKMD.

This sequence belongs to the TRAFAC class translation factor GTPase superfamily. Classic translation factor GTPase family. EF-G/EF-2 subfamily.

The protein localises to the cytoplasm. Catalyzes the GTP-dependent ribosomal translocation step during translation elongation. During this step, the ribosome changes from the pre-translocational (PRE) to the post-translocational (POST) state as the newly formed A-site-bound peptidyl-tRNA and P-site-bound deacylated tRNA move to the P and E sites, respectively. Catalyzes the coordinated movement of the two tRNA molecules, the mRNA and conformational changes in the ribosome. The protein is Elongation factor G of Lactococcus lactis subsp. cremoris (strain MG1363).